A 353-amino-acid chain; its full sequence is Lactosylceramide 4-alpha-galactosyltransferase (353 aa).

The Cytoplasmic portion of the chain corresponds to 1–22 (MSKPPDLLLRLLRGAPRQRVCT). A helical; Signal-anchor for type II membrane protein transmembrane segment spans residues 23 to 43 (LFIIGFKFTFFVSIMIYWHVV). Topologically, residues 44–353 (GEPKEKGQLY…TTHEAMKMYL (310 aa)) are lumenal. A glycan (N-linked (GlcNAc...) asparagine) is linked at Asn-121. The DXD motif signature appears at 192-194 (DTD). A glycan (N-linked (GlcNAc...) asparagine) is linked at Asn-203.

Belongs to the glycosyltransferase 32 family.

The protein resides in the golgi apparatus membrane. It carries out the reaction a beta-D-Gal-(1-&gt;4)-beta-D-Glc-(1&lt;-&gt;1)-Cer(d18:1(4E)) + UDP-alpha-D-galactose = a globoside Gb3Cer (d18:1(4E)) + UDP + H(+). The enzyme catalyses a beta-D-Gal-(1&lt;-&gt;1')-ceramide + UDP-alpha-D-galactose = alpha-D-Gal-(1-&gt;4)-beta-D-Gal-(1&lt;-&gt;1')-Cer + UDP + H(+). The protein operates within glycolipid biosynthesis. In terms of biological role, catalyzes the transfer of galactose from UDP-alpha-D-galactose to lactosylceramide/beta-D-galactosyl-(1-&gt;4)-beta-D-glucosyl-(1&lt;-&gt;1)-ceramide(d18:1(4E)) to produce globotriaosylceramide/globoside Gb3Cer (d18:1(4E)). Also able to transfer galactose to galactosylceramide/beta-D-Gal-(1&lt;-&gt;1')-Cer. Globoside Gb3Cer is a glycosphingolipid of the globo serie, one of the major types of neutral root structures of glycosphingolipids, that constitute a significant portion of mammalian cell membranes. The chain is Lactosylceramide 4-alpha-galactosyltransferase (A4GALT) from Pan troglodytes (Chimpanzee).